The sequence spans 167 residues: Small ribosomal subunit protein uS5 (167 aa).

Positions 12 to 75 constitute an S5 DRBM domain; it reads LREKLITINR…ERARGGMRTV (64 aa).

It belongs to the universal ribosomal protein uS5 family. In terms of assembly, part of the 30S ribosomal subunit. Contacts proteins S4 and S8.

Its function is as follows. With S4 and S12 plays an important role in translational accuracy. Functionally, located at the back of the 30S subunit body where it stabilizes the conformation of the head with respect to the body. This chain is Small ribosomal subunit protein uS5, found in Halorhodospira halophila (strain DSM 244 / SL1) (Ectothiorhodospira halophila (strain DSM 244 / SL1)).